Consider the following 345-residue polypeptide: Heat-inducible transcription repressor HrcA (345 aa).

Belongs to the HrcA family.

Functionally, negative regulator of class I heat shock genes (grpE-dnaK-dnaJ and groELS operons). Prevents heat-shock induction of these operons. The chain is Heat-inducible transcription repressor HrcA from Zymomonas mobilis subsp. mobilis (strain ATCC 31821 / ZM4 / CP4).